The sequence spans 385 residues: ATP phosphoribosyltransferase regulatory subunit (385 aa).

It belongs to the class-II aminoacyl-tRNA synthetase family. HisZ subfamily. As to quaternary structure, heteromultimer composed of HisG and HisZ subunits.

It is found in the cytoplasm. Its pathway is amino-acid biosynthesis; L-histidine biosynthesis; L-histidine from 5-phospho-alpha-D-ribose 1-diphosphate: step 1/9. Required for the first step of histidine biosynthesis. May allow the feedback regulation of ATP phosphoribosyltransferase activity by histidine. The polypeptide is ATP phosphoribosyltransferase regulatory subunit (Laribacter hongkongensis (strain HLHK9)).